We begin with the raw amino-acid sequence, 137 residues long: Cellular retinoic acid-binding protein 1 (137 aa).

Positions 21–31 (KALGVNTMLRK) match the Nuclear localization signal motif. 132–134 (RIY) is an all-trans-retinoate binding site.

It belongs to the calycin superfamily. Fatty-acid binding protein (FABP) family.

The protein resides in the cytoplasm. In terms of biological role, cytosolic CRABPs may regulate the access of retinoic acid to the nuclear retinoic acid receptors. This is Cellular retinoic acid-binding protein 1 (crabp1) from Takifugu rubripes (Japanese pufferfish).